The following is a 1167-amino-acid chain: ATP-dependent helicase/deoxyribonuclease subunit B (1167 aa).

Positions 1 to 359 (MSLRFLLGRS…IRQTEAYRDL (359 aa)) constitute a UvrD-like helicase ATP-binding domain. ATP is bound at residue 8–15 (GRSGSGKT). The UvrD-like helicase C-terminal domain maps to 282 to 588 (VNRRHQDKAL…EFALVPPAID (307 aa)). The [4Fe-4S] cluster site is built by cysteine 803, cysteine 1125, cysteine 1128, and cysteine 1134.

It belongs to the helicase family. AddB/RexB type 1 subfamily. As to quaternary structure, heterodimer of AddA and AddB. Requires Mg(2+) as cofactor. [4Fe-4S] cluster is required as a cofactor.

Functionally, the heterodimer acts as both an ATP-dependent DNA helicase and an ATP-dependent, dual-direction single-stranded exonuclease. Recognizes the chi site generating a DNA molecule suitable for the initiation of homologous recombination. The AddB subunit has 5' -&gt; 3' nuclease activity but not helicase activity. The protein is ATP-dependent helicase/deoxyribonuclease subunit B of Geobacillus thermodenitrificans (strain NG80-2).